A 184-amino-acid chain; its full sequence is Photosystem I assembly protein Ycf4 (184 aa).

2 consecutive transmembrane segments (helical) span residues 19-39 and 57-77; these read ISNF…LLVG and IVFF…LFIS.

It belongs to the Ycf4 family.

Its subcellular location is the plastid. The protein resides in the chloroplast thylakoid membrane. In terms of biological role, seems to be required for the assembly of the photosystem I complex. In Atropa belladonna (Belladonna), this protein is Photosystem I assembly protein Ycf4.